We begin with the raw amino-acid sequence, 417 residues long: Protein-lysine 6-oxidase (417 aa).

A signal peptide spans 1-21 (MRFAWTVLLLGPLQLCALVHC). The propeptide at 22-168 (APPAAGQQQP…PPSRVDGMVG (147 aa)) is removed by BMP1. The tract at residues 64–89 (YQPQRRRDPGAAVPGAANASAQQPRT) is disordered. Over residues 73 to 84 (GAAVPGAANASA) the composition is skewed to low complexity. Residues Asn-81, Asn-97, and Asn-144 are each glycosylated (N-linked (GlcNAc...) asparagine). The interval 137–174 (AGASRAENQTAPGEVPALSNLRPPSRVDGMVGDDPYNP) is disordered. A Sulfotyrosine modification is found at Tyr-187. Residues 213–417 (PDLVADPYYI…YASGCTISPY (205 aa)) form a lysyl-oxidase like region. Intrachain disulfides connect Cys-238–Cys-244, Cys-291–Cys-340, Cys-324–Cys-330, Cys-351–Cys-361, and Cys-398–Cys-412. Cu cation-binding residues include His-292, His-294, and His-296. The lysine tyrosylquinone (Lys-Tyr) cross-link spans 320-355 (KASFCLEDTSCDYGYHRRFACTAHTQGLSPGCYDTY). Tyr-355 is subject to 2',4',5'-topaquinone.

This sequence belongs to the lysyl oxidase family. In terms of assembly, interacts with MFAP4. Interacts (via propeptide) with EFEMP2; this interaction is strong and facilitates formation of ternary complexes with ELN during elastic fiber assembly; this interaction limits interaction of EFEMP2 with FBLN5. Cu cation serves as cofactor. Lysine tyrosylquinone residue is required as a cofactor. Post-translationally, the lysine tyrosylquinone cross-link (LTQ) is generated by condensation of the epsilon-amino group of a lysine with a topaquinone produced by oxidation of tyrosine. Proteolytically cleaved by BMP1 which removes the propeptide. Also proteolytically cleaved by ADAMTS2 and ADAMTS14, but not by ADAMTS3, at an additional cleavage site downstream of the BMP1 cleavage site. The propeptide plays a role in directing the deposition of this enzyme to elastic fibers, via interaction with tropoelastin. Cleavage by BMP1 to remove the propeptide does not increase enzymatic activity but increases binding to collagen. Cleavage by ADAMTS2 produces a form with reduced collagen-binding activity. In terms of processing, sulfated at Tyr-187 and also at either Tyr-183 or Tyr-184 which enhances binding to collagen. In terms of tissue distribution, heart, placenta, skeletal muscle, kidney, lung and pancreas.

It is found in the secreted. The protein localises to the extracellular space. It catalyses the reaction L-lysyl-[protein] + O2 + H2O = (S)-2-amino-6-oxohexanoyl-[protein] + H2O2 + NH4(+). Functionally, responsible for the post-translational oxidative deamination of peptidyl lysine residues in precursors to fibrous collagen and elastin. Regulator of Ras expression. May play a role in tumor suppression. Plays a role in the aortic wall architecture. This chain is Protein-lysine 6-oxidase (LOX), found in Homo sapiens (Human).